A 130-amino-acid chain; its full sequence is Histone H2A type 1-E (130 aa).

The tract at residues 1–22 (MSGRGKQGGKARAKAKTRSSRA) is disordered. Serine 2 carries the post-translational modification N-acetylserine. The residue at position 2 (serine 2) is a Phosphoserine; by RPS6KA5. Arginine 4 carries the post-translational modification Citrulline; alternate. At arginine 4 the chain carries Symmetric dimethylarginine; by PRMT5; alternate. Lysine 6 and lysine 10 each carry N6-(2-hydroxyisobutyryl)lysine; alternate. Residue lysine 6 is modified to N6-acetyllysine; alternate. Residues 7–19 (QGGKARAKAKTRS) show a composition bias toward basic residues. An N6-lactoyllysine; alternate modification is found at lysine 10. Lysine 10 bears the N6-succinyllysine; alternate mark. Residues lysine 14 and lysine 16 each participate in a glycyl lysine isopeptide (Lys-Gly) (interchain with G-Cter in ubiquitin) cross-link. Lysine 37 carries the N6-(2-hydroxyisobutyryl)lysine; alternate modification. Lysine 37 carries the N6-(beta-hydroxybutyryl)lysine; alternate modification. Lysine 37 is modified (N6-crotonyllysine; alternate). An N6-(2-hydroxyisobutyryl)lysine mark is found at lysine 75 and lysine 76. Residue lysine 96 is modified to N6-(2-hydroxyisobutyryl)lysine; alternate. Lysine 96 is subject to N6-succinyllysine; alternate. An N6-glutaryllysine; alternate modification is found at lysine 96. Glutamine 105 carries the N5-methylglutamine modification. Position 119 is an N6-(2-hydroxyisobutyryl)lysine; alternate (lysine 119). N6-crotonyllysine; alternate is present on residues lysine 119 and lysine 120. Lysine 119 and lysine 120 each carry N6-glutaryllysine; alternate. Lysine 120 is covalently cross-linked (Glycyl lysine isopeptide (Lys-Gly) (interchain with G-Cter in ubiquitin); alternate). At threonine 121 the chain carries Phosphothreonine; by DCAF1. Lysine 126 carries the post-translational modification N6-crotonyllysine; alternate. Residue lysine 126 is modified to N6-glutaryllysine; alternate.

This sequence belongs to the histone H2A family. The nucleosome is a histone octamer containing two molecules each of H2A, H2B, H3 and H4 assembled in one H3-H4 heterotetramer and two H2A-H2B heterodimers. The octamer wraps approximately 147 bp of DNA. In terms of processing, deiminated on Arg-4 in granulocytes upon calcium entry. Monoubiquitination of Lys-120 (H2AK119Ub) by RING1, TRIM37 and RNF2/RING2 complex gives a specific tag for epigenetic transcriptional repression and participates in X chromosome inactivation of female mammals. It is involved in the initiation of both imprinted and random X inactivation. Ubiquitinated H2A is enriched in inactive X chromosome chromatin. Ubiquitination of H2A functions downstream of methylation of 'Lys-27' of histone H3 (H3K27me). H2AK119Ub by RNF2/RING2 can also be induced by ultraviolet and may be involved in DNA repair. Following DNA double-strand breaks (DSBs), it is ubiquitinated through 'Lys-63' linkage of ubiquitin moieties by the E2 ligase UBE2N and the E3 ligases RNF8 and RNF168, leading to the recruitment of repair proteins to sites of DNA damage. Ubiquitination at Lys-14 and Lys-16 (H2AK13Ub and H2AK15Ub, respectively) in response to DNA damage is initiated by RNF168 that mediates monoubiquitination at these 2 sites, and 'Lys-63'-linked ubiquitin are then conjugated to monoubiquitin; RNF8 is able to extend 'Lys-63'-linked ubiquitin chains in vitro. H2AK119Ub and ionizing radiation-induced 'Lys-63'-linked ubiquitination (H2AK13Ub and H2AK15Ub) are distinct events. Post-translationally, phosphorylation on Ser-2 (H2AS1ph) is enhanced during mitosis. Phosphorylation on Ser-2 by RPS6KA5/MSK1 directly represses transcription. Acetylation of H3 inhibits Ser-2 phosphorylation by RPS6KA5/MSK1. Phosphorylation at Thr-121 (H2AT120ph) by DCAF1 is present in the regulatory region of many tumor suppresor genes and down-regulates their transcription. In terms of processing, symmetric dimethylation on Arg-4 by the PRDM1/PRMT5 complex may play a crucial role in the germ-cell lineage. Glutamine methylation at Gln-105 (H2AQ104me) by FBL is specifically dedicated to polymerase I. It is present at 35S ribosomal DNA locus and impairs binding of the FACT complex. Post-translationally, crotonylation (Kcr) is specifically present in male germ cells and marks testis-specific genes in post-meiotic cells, including X-linked genes that escape sex chromosome inactivation in haploid cells. Crotonylation marks active promoters and enhancers and confers resistance to transcriptional repressors. It is also associated with post-meiotically activated genes on autosomes. In terms of processing, lactylated in macrophages by EP300/P300 by using lactoyl-CoA directly derived from endogenous or exogenous lactate, leading to stimulates gene transcription.

The protein localises to the nucleus. It is found in the chromosome. In terms of biological role, core component of nucleosome. Nucleosomes wrap and compact DNA into chromatin, limiting DNA accessibility to the cellular machineries which require DNA as a template. Histones thereby play a central role in transcription regulation, DNA repair, DNA replication and chromosomal stability. DNA accessibility is regulated via a complex set of post-translational modifications of histones, also called histone code, and nucleosome remodeling. The protein is Histone H2A type 1-E of Rattus norvegicus (Rat).